Here is a 298-residue protein sequence, read N- to C-terminus: Beta-soluble NSF attachment protein (298 aa).

Belongs to the SNAP family. In terms of assembly, interacts with PRKCABP, and disrupts the interaction between GRIA2 and PRKCABP, leading to the internalization of GRIA2.

The protein localises to the membrane. Required for vesicular transport between the endoplasmic reticulum and the Golgi apparatus. This Homo sapiens (Human) protein is Beta-soluble NSF attachment protein (NAPB).